Here is a 423-residue protein sequence, read N- to C-terminus: Histidine--tRNA ligase (423 aa).

This sequence belongs to the class-II aminoacyl-tRNA synthetase family. In terms of assembly, homodimer.

It is found in the cytoplasm. It carries out the reaction tRNA(His) + L-histidine + ATP = L-histidyl-tRNA(His) + AMP + diphosphate + H(+). In Orientia tsutsugamushi (strain Boryong) (Rickettsia tsutsugamushi), this protein is Histidine--tRNA ligase.